Here is a 363-residue protein sequence, read N- to C-terminus: Peroxisomal (S)-2-hydroxyacid oxidase GLO3 (363 aa).

Positions 1–357 constitute an FMN hydroxy acid dehydrogenase domain; it reads MDQIVNVDEF…TRNHVRTENE (357 aa). Residues 78-80, Ser107, 128-130, and Thr156 each bind FMN; these read PTG and QIY. Tyr130 lines the a 2-oxocarboxylate pocket. Arg165 is a binding site for a 2-oxocarboxylate. FMN is bound by residues Lys228 and Ser250. The active-site Proton acceptor is the His252. Residue Arg255 coordinates a 2-oxocarboxylate. Residues 283 to 287 and 306 to 307 each bind FMN; these read DGGVR and GR. The Microbody targeting signal motif lies at 361-363; it reads SML.

Belongs to the FMN-dependent alpha-hydroxy acid dehydrogenase family. In terms of assembly, homotetramer. It depends on FMN as a cofactor.

It localises to the peroxisome. It carries out the reaction a (2S)-2-hydroxycarboxylate + O2 = a 2-oxocarboxylate + H2O2. The enzyme catalyses 2-hydroxy-4-methylpentanoate + O2 = 4-methyl-2-oxopentanoate + H2O2. It catalyses the reaction 2-hydroxyhexanoate + O2 = 2-oxohexanoate + H2O2. The catalysed reaction is 2-hydroxyoctanoate + O2 = 2-oxooctanoate + H2O2. Functionally, oxidase that catalyzes the oxidation of a broad range of 2-hydroxyacids to the corresponding 2-oxoacids, with a reduction of O2 to H2O2. Displays the highest activity with leucic acid (2-hydroxy-4-methylpentanoate) and has intermediate activity with 2-hydroxyhexanoate and 2-hydroxyoctanote. Shows lower activity with 2-hydroxydodecanoate, valic acid, and isoleucic acid and extremely low activity with glycolate and L-lactate. Cannot use 2-hydroxyhexadecanoate or D-lactate as substrates. May be involved in the conversion or degradation of 2-hydroxyacids produced during the metabolism of fatty acids or amino acids. The sequence is that of Peroxisomal (S)-2-hydroxyacid oxidase GLO3 (GLO3) from Arabidopsis thaliana (Mouse-ear cress).